Reading from the N-terminus, the 292-residue chain is UPF0696 protein C11orf68 (292 aa).

Residues Met-1–Gly-11 show a composition bias toward low complexity. The disordered stretch occupies residues Met-1 to Gly-60. Arg-29 carries the post-translational modification Omega-N-methylarginine. Over residues Glu-35–Pro-44 the composition is skewed to basic and acidic residues.

This sequence belongs to the UPF0696 family.

This is UPF0696 protein C11orf68 (C11orf68) from Homo sapiens (Human).